Reading from the N-terminus, the 105-residue chain is MESGFLNIGFSSYISVSKIIGIVSPDSAPIRRMIRLAKEQGRLVDATFGRRTRAAILTEGGFIVLSAVLPDTLVSRLEEEEEEEERTEPITEQEAELEEESGEDV.

The interval 76–105 is disordered; that stretch reads RLEEEEEEEERTEPITEQEAELEEESGEDV. Positions 78–105 are enriched in acidic residues; sequence EEEEEEEERTEPITEQEAELEEESGEDV.

The protein belongs to the RemA family.

The polypeptide is Putative regulatory protein COPRO5265_1186 (Coprothermobacter proteolyticus (strain ATCC 35245 / DSM 5265 / OCM 4 / BT)).